The chain runs to 173 residues: NEDD4-binding protein 2-like 1 (173 aa).

Residues 1–35 (MEESFLESFGRLSLRQQQPPPPRPPAPPPLRGTPP) are disordered. The segment covering 18–32 (QPPPPRPPAPPPLRG) has biased composition (pro residues).

In terms of assembly, interacts with dynactin subunit proteins, including DCTN4, DCTN5 and DCTN5.

Its function is as follows. Might play a role in adipocyte differentiation and triglyceride accumulation. This Bos taurus (Bovine) protein is NEDD4-binding protein 2-like 1 (N4BP2L1).